The chain runs to 120 residues: NAD(P)H-quinone oxidoreductase subunit 3, chloroplastic (120 aa).

Helical transmembrane passes span 9–29, 64–84, and 88–108; these read IFWA…LISG, MFAL…PWAM, and VLGV…IVGL.

It belongs to the complex I subunit 3 family. In terms of assembly, NDH is composed of at least 16 different subunits, 5 of which are encoded in the nucleus.

The protein localises to the plastid. It is found in the chloroplast thylakoid membrane. It carries out the reaction a plastoquinone + NADH + (n+1) H(+)(in) = a plastoquinol + NAD(+) + n H(+)(out). The enzyme catalyses a plastoquinone + NADPH + (n+1) H(+)(in) = a plastoquinol + NADP(+) + n H(+)(out). In terms of biological role, NDH shuttles electrons from NAD(P)H:plastoquinone, via FMN and iron-sulfur (Fe-S) centers, to quinones in the photosynthetic chain and possibly in a chloroplast respiratory chain. The immediate electron acceptor for the enzyme in this species is believed to be plastoquinone. Couples the redox reaction to proton translocation, and thus conserves the redox energy in a proton gradient. The polypeptide is NAD(P)H-quinone oxidoreductase subunit 3, chloroplastic (Populus alba (White poplar)).